The chain runs to 172 residues: Adenine phosphoribosyltransferase (172 aa).

It belongs to the purine/pyrimidine phosphoribosyltransferase family. In terms of assembly, homodimer.

The protein localises to the cytoplasm. The enzyme catalyses AMP + diphosphate = 5-phospho-alpha-D-ribose 1-diphosphate + adenine. It functions in the pathway purine metabolism; AMP biosynthesis via salvage pathway; AMP from adenine: step 1/1. Its function is as follows. Catalyzes a salvage reaction resulting in the formation of AMP, that is energically less costly than de novo synthesis. This chain is Adenine phosphoribosyltransferase, found in Levilactobacillus brevis (strain ATCC 367 / BCRC 12310 / CIP 105137 / JCM 1170 / LMG 11437 / NCIMB 947 / NCTC 947) (Lactobacillus brevis).